Reading from the N-terminus, the 257-residue chain is MQTMTIKEAENVLKEIMNEEDDRFQLLMKDDRKGVQKLVLKWYKQKELEQKEKEKFFEMSKYENALREKGVTYIAGIDEVGRGPLAGPVVTAAVVLPEDFYIPGLNDSKKLSEAKRERFYDEIKVQAIAIGVGIVSPQVIDDINIYQATKQAMLDAVANLSCTPQHLLIDAMKLPTPIPQTSIIKGDAKSVSISAASIIAKVTRDRMMKELGGKYPEYGFEQHMGYGTKQHLEAIEVHGVLDEHRKSFAPIKDMIQK.

An RNase H type-2 domain is found at 72-257; sequence TYIAGIDEVG…FAPIKDMIQK (186 aa). A divalent metal cation contacts are provided by aspartate 78, glutamate 79, and aspartate 170.

It belongs to the RNase HII family. Mn(2+) is required as a cofactor. The cofactor is Mg(2+).

It is found in the cytoplasm. The catalysed reaction is Endonucleolytic cleavage to 5'-phosphomonoester.. Endonuclease that specifically degrades the RNA of RNA-DNA hybrids. The protein is Ribonuclease HII of Bacillus cereus (strain ATCC 14579 / DSM 31 / CCUG 7414 / JCM 2152 / NBRC 15305 / NCIMB 9373 / NCTC 2599 / NRRL B-3711).